The sequence spans 683 residues: DNA-directed RNA polymerase subunit beta' (683 aa).

Zn(2+) is bound by residues cysteine 69, cysteine 71, cysteine 87, and cysteine 90. Aspartate 489, aspartate 491, and aspartate 493 together coordinate Mg(2+).

Belongs to the RNA polymerase beta' chain family. RpoC1 subfamily. As to quaternary structure, in plastids the minimal PEP RNA polymerase catalytic core is composed of four subunits: alpha, beta, beta', and beta''. When a (nuclear-encoded) sigma factor is associated with the core the holoenzyme is formed, which can initiate transcription. Mg(2+) is required as a cofactor. Requires Zn(2+) as cofactor.

The protein localises to the plastid. It is found in the chloroplast. The catalysed reaction is RNA(n) + a ribonucleoside 5'-triphosphate = RNA(n+1) + diphosphate. Its function is as follows. DNA-dependent RNA polymerase catalyzes the transcription of DNA into RNA using the four ribonucleoside triphosphates as substrates. This chain is DNA-directed RNA polymerase subunit beta', found in Zea mays (Maize).